Here is a 427-residue protein sequence, read N- to C-terminus: Glutamate-1-semialdehyde 2,1-aminomutase (427 aa).

Lysine 265 is modified (N6-(pyridoxal phosphate)lysine).

It belongs to the class-III pyridoxal-phosphate-dependent aminotransferase family. HemL subfamily. Homodimer. The cofactor is pyridoxal 5'-phosphate.

It localises to the cytoplasm. It carries out the reaction (S)-4-amino-5-oxopentanoate = 5-aminolevulinate. It functions in the pathway porphyrin-containing compound metabolism; protoporphyrin-IX biosynthesis; 5-aminolevulinate from L-glutamyl-tRNA(Glu): step 2/2. The protein is Glutamate-1-semialdehyde 2,1-aminomutase of Bordetella parapertussis (strain 12822 / ATCC BAA-587 / NCTC 13253).